A 1155-amino-acid chain; its full sequence is MFPSVSSPRTPGPGTRRGPLVGIGPTSTPRASRRGLSLGSAVNSPVLFSPAGRRSSVSSRGTPTRIFPHHSISESVNYDVRVFGSSLPVKIMEALTMAEADEQLSVHVDEGGWACLVCTEKLLIWKIAVSPVTKLSVCKELQLPPSDFHGSADLVALSYAATSGEVHSVQAVSVMVATKEGSIRYWPSLAREDTYSDTCVDLGGEKMCRFLTAVQGGSFILSSVGSQLVRLIPESSGKIHQHVLPQGQGMLSGIGRRVSSLFGILSPTSDLMLASVLWDRGGSSFYTLTSSNISKWELDDSSEKQVHSWDVHRTLKESITDAVWGSESNYEAIKEGVNIQYLDLKQNCDGLLILAAAWHLGDSPCLVYYSVITVEDNGNQMSDAVTVEVTQYNPPFQSEDLIACRLMVPNFSSQMTYLYMENAVFVCSTGTGKFSLPQEKIVFDTQGDGILGAGSCAGVPILFSRNSGLVSVTPRENVSLLAEDLEESLTSSVGGRGSESMVFETTTKNETVAHEDKTKLLKAAFLQYCRKDLGRAQIMADELFSSHTDLDSDPELDKAVTQISVDLIDDYPASDPRWAESVPQEAPGLSNTSLIILHQLEDKMKAHCLLVDFLHQVGLFRRLSSYPIRGTPMSTRLLLCEHAEKLSAAITLKNHHSRLPDLVNSAILLALNKRECEVPNSLTPADVFFREVSQVDTICECLLEHEEQVLREVALVSQEWAEVAIDVNTVLKDMLQAATHYRLNKSSMYSQEEVLGKEPEYVPWTATSGPSGIRTAVMRQHGIILKMVYPQADSKLRNVVMEQLVALIDCFLDSYVSQLKSLEKSSDQERYSSLEVEYLQKRSELLSPLLTLGQYPWAASLAEKYCDFDILVQMCEQTDNQARLQRYMTQFADQNFSDFLFRWYLEKGKRGKLLSQPISQHGQLANFLQAHEHLSWLHEINSQELEKAHTTLLGLANMETRYFAKKKTLLGLSKLAALASDISEDRLQEKIEAMAEQERFLLHQETLPEQLLTERQLSLSAMPVLTAPQLISLYICDENRRANEYDFKKALDLLEYIDEEEDVSIDDLKLEILCRALQRDDWSGSDGKDDPIEVSKDSVFVKILQKLIKDGIQLSEYLPEVTDLLRAEQLGSLKSNSYFEFVLKANYEYYVQGQM.

Position 1 is an N-acetylmethionine (methionine 1). The segment at 1-36 (MFPSVSSPRTPGPGTRRGPLVGIGPTSTPRASRRGL) is disordered. Serine 7 carries the post-translational modification Phosphoserine. Over residues 8–19 (PRTPGPGTRRGP) the composition is skewed to low complexity. An Omega-N-methylarginine modification is found at arginine 17. Serine 27 carries the phosphoserine modification. Phosphothreonine is present on threonine 28. An omega-N-methylarginine mark is found at arginine 30 and arginine 34. A phosphoserine mark is found at serine 37, serine 40, serine 44, serine 49, serine 71, serine 130, serine 479, serine 488, serine 492, and serine 500. Lysine 786 carries the N6-acetyllysine modification. Residue serine 1132 is modified to Phosphoserine.

The protein belongs to the nucleoporin Nup133 family. Forms part of the Nup160 subcomplex in the nuclear pore which is composed of NUP160, NUP133, NUP107 and Nup96. This complex plays a role in RNA export and in tethering Nup98 and NUP153 to the nucleus.

The protein resides in the nucleus. Its subcellular location is the nuclear pore complex. It is found in the chromosome. It localises to the centromere. The protein localises to the kinetochore. In terms of biological role, involved in poly(A)+ RNA transport. Involved in nephrogenesis. The polypeptide is Nuclear pore complex protein Nup133 (Nup133) (Mus musculus (Mouse)).